We begin with the raw amino-acid sequence, 146 residues long: D-aminoacyl-tRNA deacylase (146 aa).

Residues 138–139 carry the Gly-cisPro motif, important for rejection of L-amino acids motif; it reads GP.

The protein belongs to the DTD family. As to quaternary structure, homodimer.

It localises to the cytoplasm. It catalyses the reaction glycyl-tRNA(Ala) + H2O = tRNA(Ala) + glycine + H(+). The enzyme catalyses a D-aminoacyl-tRNA + H2O = a tRNA + a D-alpha-amino acid + H(+). An aminoacyl-tRNA editing enzyme that deacylates mischarged D-aminoacyl-tRNAs. Also deacylates mischarged glycyl-tRNA(Ala), protecting cells against glycine mischarging by AlaRS. Acts via tRNA-based rather than protein-based catalysis; rejects L-amino acids rather than detecting D-amino acids in the active site. By recycling D-aminoacyl-tRNA to D-amino acids and free tRNA molecules, this enzyme counteracts the toxicity associated with the formation of D-aminoacyl-tRNA entities in vivo and helps enforce protein L-homochirality. The sequence is that of D-aminoacyl-tRNA deacylase from Xanthomonas axonopodis pv. citri (strain 306).